The sequence spans 293 residues: Energy-coupling factor transporter ATP-binding protein EcfA2 (293 aa).

The ABC transporter domain maps to 3 to 246; sequence ITFQKVEHRY…ADELEKIGVD (244 aa). 40–47 provides a ligand contact to ATP; it reads GHTGSGKS.

This sequence belongs to the ABC transporter superfamily. Energy-coupling factor EcfA family. As to quaternary structure, forms a stable energy-coupling factor (ECF) transporter complex composed of 2 membrane-embedded substrate-binding proteins (S component), 2 ATP-binding proteins (A component) and 2 transmembrane proteins (T component).

The protein localises to the cell membrane. In terms of biological role, ATP-binding (A) component of a common energy-coupling factor (ECF) ABC-transporter complex. Unlike classic ABC transporters this ECF transporter provides the energy necessary to transport a number of different substrates. The protein is Energy-coupling factor transporter ATP-binding protein EcfA2 of Bacillus anthracis.